We begin with the raw amino-acid sequence, 301 residues long: MTRHGKNCTAGAVYTYHEKKKDTAASGYGTQNIRLSRDAVKDFDCCCLSLQPCHDPVVTPDGYLYEREAILEYILHQKREIARQVKAYEKQRGARREEQKELQRAAAQDQVRGFLEKEAAIVSRPLNPFMPKAATLPNTEGEQPGPSVGPVGKDKDKALPSFWIPSLTPEAKATKLEKPSRTVTCPMSGKPLRMSDLTSVRFTQLDDSVDRVGLITRSERYVCAVTRDSLSNATPCAVLRPSGAVVTLECVEKLIRKDMVDPVNGDTLTERDIIVLQRGGTGFAGSGVKLQAEMSRPVMQA.

Ser-36 carries the post-translational modification Phosphoserine. The U-box-like stretch occupies residues 55–75; it reads DPVVTPDGYLYEREAILEYIL. The Nuclear localization signal signature appears at 78-101; it reads KREIARQVKAYEKQRGARREEQKE. The tract at residues 131–154 is disordered; sequence PKAATLPNTEGEQPGPSVGPVGKD.

Belongs to the NOSIP family. In terms of assembly, interacts with NOS1 and NOS3. Interacts with PP2A holoenzyme, containing PPP2CA, PPP2CB, PPP2R1A and PPP2R2A subunits.

It is found in the cytoplasm. The protein localises to the nucleus. It catalyses the reaction S-ubiquitinyl-[E2 ubiquitin-conjugating enzyme]-L-cysteine + [acceptor protein]-L-lysine = [E2 ubiquitin-conjugating enzyme]-L-cysteine + N(6)-ubiquitinyl-[acceptor protein]-L-lysine.. It functions in the pathway protein modification; protein ubiquitination. Functionally, E3 ubiquitin-protein ligase that is essential for proper development of the forebrain, the eye and the face. Catalyzes monoubiquitination of serine/threonine-protein phosphatase 2A (PP2A) catalytic subunit PPP2CA/PPP2CB. Negatively regulates nitric oxide production by inducing NOS1 and NOS3 translocation to actin cytoskeleton and inhibiting their enzymatic activity. This chain is Nitric oxide synthase-interacting protein (Nosip), found in Mus musculus (Mouse).